A 218-amino-acid chain; its full sequence is MFGFLKKVADYTRDAADAANYLIQGLAVTFDHLRRRPITVQYPYEKLIPSERYRGRIHYEFDKCIACEVCVRVCPINLPVVDWVMNKETKKKELRNYSIDFGVCIFCGNCVEYCPTNCLSMTEEYELAAYDRHSLNYDNVALGRLPTSVTTDPSVQPLRELAYLPKGVMDPHDVPANQPRAGQLPAEVLKSLSLQQDSLQGDEGESLQDAPDQDQPKG.

4Fe-4S ferredoxin-type domains lie at 55-84 (GRIHYEFDKCIACEVCVRVCPINLPVVDWV) and 95-124 (RNYSIDFGVCIFCGNCVEYCPTNCLSMTEE). [4Fe-4S] cluster contacts are provided by C64, C67, C70, C74, C104, C107, C110, and C114. A disordered region spans residues 192–218 (LSLQQDSLQGDEGESLQDAPDQDQPKG).

Belongs to the complex I 23 kDa subunit family. As to quaternary structure, NDH-1 is composed of at least 11 different subunits. It depends on [4Fe-4S] cluster as a cofactor.

Its subcellular location is the cellular thylakoid membrane. It catalyses the reaction a plastoquinone + NADH + (n+1) H(+)(in) = a plastoquinol + NAD(+) + n H(+)(out). The catalysed reaction is a plastoquinone + NADPH + (n+1) H(+)(in) = a plastoquinol + NADP(+) + n H(+)(out). Its function is as follows. NDH-1 shuttles electrons from an unknown electron donor, via FMN and iron-sulfur (Fe-S) centers, to quinones in the respiratory and/or the photosynthetic chain. The immediate electron acceptor for the enzyme in this species is believed to be plastoquinone. Couples the redox reaction to proton translocation, and thus conserves the redox energy in a proton gradient. This chain is NAD(P)H-quinone oxidoreductase subunit I, found in Prochlorococcus marinus (strain MIT 9303).